The following is a 341-amino-acid chain: Glycerol-3-phosphate dehydrogenase [NAD(P)+] (341 aa).

The NADPH site is built by serine 14, phenylalanine 15, arginine 35, and lysine 108. Residues lysine 108 and glycine 136 each coordinate sn-glycerol 3-phosphate. Serine 140 contributes to the NADPH binding site. Sn-glycerol 3-phosphate is bound by residues lysine 191, aspartate 244, serine 254, arginine 255, and asparagine 256. Lysine 191 acts as the Proton acceptor in catalysis. Arginine 255 provides a ligand contact to NADPH. Valine 279 and glutamate 281 together coordinate NADPH.

This sequence belongs to the NAD-dependent glycerol-3-phosphate dehydrogenase family.

It localises to the cytoplasm. The enzyme catalyses sn-glycerol 3-phosphate + NAD(+) = dihydroxyacetone phosphate + NADH + H(+). It carries out the reaction sn-glycerol 3-phosphate + NADP(+) = dihydroxyacetone phosphate + NADPH + H(+). It functions in the pathway membrane lipid metabolism; glycerophospholipid metabolism. Its function is as follows. Catalyzes the reduction of the glycolytic intermediate dihydroxyacetone phosphate (DHAP) to sn-glycerol 3-phosphate (G3P), the key precursor for phospholipid synthesis. This chain is Glycerol-3-phosphate dehydrogenase [NAD(P)+], found in Pseudomonas putida (strain GB-1).